Consider the following 179-residue polypeptide: NEDD8-conjugating enzyme UBC12 (179 aa).

Positions A24–V168 constitute a UBC core domain. C106 functions as the Glycyl thioester intermediate in the catalytic mechanism.

Belongs to the ubiquitin-conjugating enzyme family. UBC12 subfamily.

The enzyme catalyses [E1 NEDD8-activating enzyme]-S-[NEDD8 protein]-yl-L-cysteine + [E2 NEDD8-conjugating enzyme]-L-cysteine = [E1 NEDD8-activating enzyme]-L-cysteine + [E2 NEDD8-conjugating enzyme]-S-[NEDD8-protein]-yl-L-cysteine.. The protein operates within protein modification; protein neddylation. Its function is as follows. Accepts the ubiquitin-like protein NEDD8/RUB1 from the UBA3-ULA1 E1 complex and catalyzes its covalent attachment to other proteins. This Yarrowia lipolytica (strain CLIB 122 / E 150) (Yeast) protein is NEDD8-conjugating enzyme UBC12 (UBC12).